We begin with the raw amino-acid sequence, 181 residues long: Shikimate kinase 2 (181 aa).

12-17 is a binding site for ATP; the sequence is GCGKTT. Positions 16 and 32 each coordinate Mg(2+). Positions 34, 58, and 79 each coordinate substrate. The tract at residues 112–126 is LID domain; that stretch reads EAEPEADLRPTLTGK. Arg120 contributes to the ATP binding site. Position 139 (Arg139) interacts with substrate.

This sequence belongs to the shikimate kinase family. AroL subfamily. As to quaternary structure, monomer. The cofactor is Mg(2+).

The protein localises to the cytoplasm. It carries out the reaction shikimate + ATP = 3-phosphoshikimate + ADP + H(+). It functions in the pathway metabolic intermediate biosynthesis; chorismate biosynthesis; chorismate from D-erythrose 4-phosphate and phosphoenolpyruvate: step 5/7. In terms of biological role, catalyzes the specific phosphorylation of the 3-hydroxyl group of shikimic acid using ATP as a cosubstrate. The sequence is that of Shikimate kinase 2 from Salmonella heidelberg (strain SL476).